The following is a 140-amino-acid chain: Nucleoside diphosphate kinase (140 aa).

Residues Lys-11, Phe-59, Arg-87, Thr-93, Arg-104, and Asn-114 each contribute to the ATP site. The active-site Pros-phosphohistidine intermediate is the His-117.

Belongs to the NDK family. As to quaternary structure, homotetramer. Requires Mg(2+) as cofactor.

Its subcellular location is the cytoplasm. It catalyses the reaction a 2'-deoxyribonucleoside 5'-diphosphate + ATP = a 2'-deoxyribonucleoside 5'-triphosphate + ADP. It carries out the reaction a ribonucleoside 5'-diphosphate + ATP = a ribonucleoside 5'-triphosphate + ADP. Major role in the synthesis of nucleoside triphosphates other than ATP. The ATP gamma phosphate is transferred to the NDP beta phosphate via a ping-pong mechanism, using a phosphorylated active-site intermediate. The chain is Nucleoside diphosphate kinase from Francisella tularensis subsp. mediasiatica (strain FSC147).